The chain runs to 296 residues: tRNA (guanine-N(7)-)-methyltransferase (296 aa).

The disordered stretch occupies residues 1–26 (MSKRTREESEMEAGPSTASPGVSVSP). S-adenosyl-L-methionine-binding positions include glycine 101, 124–125 (EI), 168–169 (NS), and leucine 188. Aspartate 191 is an active-site residue. 266-268 (TEE) lines the S-adenosyl-L-methionine pocket.

This sequence belongs to the class I-like SAM-binding methyltransferase superfamily. TrmB family. As to quaternary structure, forms a complex with TRM82.

The protein localises to the nucleus. It catalyses the reaction guanosine(46) in tRNA + S-adenosyl-L-methionine = N(7)-methylguanosine(46) in tRNA + S-adenosyl-L-homocysteine. Its pathway is tRNA modification; N(7)-methylguanine-tRNA biosynthesis. Its function is as follows. Catalyzes the formation of N(7)-methylguanine at position 46 (m7G46) in tRNA. This chain is tRNA (guanine-N(7)-)-methyltransferase, found in Cryptococcus neoformans var. neoformans serotype D (strain JEC21 / ATCC MYA-565) (Filobasidiella neoformans).